A 772-amino-acid polypeptide reads, in one-letter code: Chondroitin sulfate glucuronyltransferase (772 aa).

At 1–6 (MRLSSL) the chain is on the cytoplasmic side. The chain crosses the membrane as a helical; Signal-anchor for type II membrane protein span at residues 7-29 (LALLRPALPLILGLSLGCSLSLL). Residues 30-772 (RVSWIQGEGE…LFEQEQANST (743 aa)) lie on the Lumenal side of the membrane. 2 N-linked (GlcNAc...) asparagine glycosylation sites follow: N121 and N342. Residues 629-662 (ALSPQRSPPGPPGAGPDPPSPPGADPSRGAPIGG) form a disordered region. Over residues 634–652 (RSPPGPPGAGPDPPSPPGA) the composition is skewed to pro residues.

It belongs to the chondroitin N-acetylgalactosaminyltransferase family. Ubiquitous. Highly expressed in placenta, small intestine and pancreas.

The protein resides in the golgi apparatus. Its subcellular location is the golgi stack membrane. It catalyses the reaction 3-O-(beta-D-GalNAc-(1-&gt;4)-beta-D-GlcA-(1-&gt;3)-beta-D-Gal-(1-&gt;3)-beta-D-Gal-(1-&gt;4)-beta-D-Xyl)-L-seryl-[protein] + UDP-alpha-D-glucuronate = 3-O-(beta-D-GlcA-(1-&gt;3)-beta-D-GalNAc-(1-&gt;4)-beta-D-GlcA-(1-&gt;3)-beta-D-Gal-(1-&gt;3)-beta-D-Gal-(1-&gt;4)-beta-D-Xyl)-L-seryl-[protein] + UDP + H(+). The enzyme catalyses 3-O-{[beta-D-GalNAc-(1-&gt;4)-beta-D-GlcA-(1-&gt;3)](n)-beta-D-GalNAc-(1-&gt;4)-beta-D-GlcA-(1-&gt;3)-beta-D-Gal-(1-&gt;3)-beta-D-Gal-(1-&gt;4)-beta-D-Xyl}-L-seryl-[protein] + UDP-alpha-D-glucuronate = 3-O-{beta-D-GlcA-(1-&gt;3)-[beta-D-GalNAc-(1-&gt;4)-beta-D-GlcA-(1-&gt;3)](n)-beta-D-GalNAc-(1-&gt;4)-beta-D-GlcA-(1-&gt;3)-beta-D-Gal-(1-&gt;3)-beta-D-Gal-(1-&gt;4)-beta-D-Xyl}-L-seryl-[protein] + UDP + H(+). Functionally, transfers glucuronic acid (GlcUA) from UDP-GlcUA to N-acetylgalactosamine residues on the non-reducing end of the elongating chondroitin polymer. Has no N-acetylgalactosaminyltransferase activity. This Homo sapiens (Human) protein is Chondroitin sulfate glucuronyltransferase (CHPF2).